A 314-amino-acid polypeptide reads, in one-letter code: Methionyl-tRNA formyltransferase (314 aa).

112-115 (SLLP) contributes to the (6S)-5,6,7,8-tetrahydrofolate binding site.

This sequence belongs to the Fmt family.

It catalyses the reaction L-methionyl-tRNA(fMet) + (6R)-10-formyltetrahydrofolate = N-formyl-L-methionyl-tRNA(fMet) + (6S)-5,6,7,8-tetrahydrofolate + H(+). Attaches a formyl group to the free amino group of methionyl-tRNA(fMet). The formyl group appears to play a dual role in the initiator identity of N-formylmethionyl-tRNA by promoting its recognition by IF2 and preventing the misappropriation of this tRNA by the elongation apparatus. The polypeptide is Methionyl-tRNA formyltransferase (Aeromonas hydrophila subsp. hydrophila (strain ATCC 7966 / DSM 30187 / BCRC 13018 / CCUG 14551 / JCM 1027 / KCTC 2358 / NCIMB 9240 / NCTC 8049)).